The primary structure comprises 186 residues: Probable chorismate pyruvate-lyase (186 aa).

The substrate site is built by Arg-78, Leu-116, and Glu-175.

It belongs to the UbiC family.

It is found in the cytoplasm. The catalysed reaction is chorismate = 4-hydroxybenzoate + pyruvate. Its pathway is cofactor biosynthesis; ubiquinone biosynthesis. Removes the pyruvyl group from chorismate, with concomitant aromatization of the ring, to provide 4-hydroxybenzoate (4HB) for the ubiquinone pathway. The protein is Probable chorismate pyruvate-lyase of Psychromonas ingrahamii (strain DSM 17664 / CCUG 51855 / 37).